The sequence spans 243 residues: Amphiregulin (243 aa).

The signal sequence occupies residues 1-24 (MRTPSLSLALSVLSLLVLGSGHYA). Residues 25 to 96 (AGLELNGTSS…IVDDSVRVEQ (72 aa)) constitute a propeptide that is removed on maturation. N-linked (GlcNAc...) asparagine glycosylation is present at asparagine 30. The span at 55 to 67 (STISEMPSGSELS) shows a compositional bias: polar residues. Disordered regions lie at residues 55–75 (STISEMPSGSELSTGDYDYSE) and 98–135 (IKPKENKTEGEKSSEKPKRKKKGGKGGKGRRNRKKKKN). Residues 98 to 113 (IKPKENKTEGEKSSEK) are compositionally biased toward basic and acidic residues. An N-linked (GlcNAc...) asparagine glycan is attached at asparagine 103. Basic residues predominate over residues 114–135 (PKRKKKGGKGGKGRRNRKKKKN). An EGF-like domain is found at 133–173 (KKNPCAAKFQNFCIHGECRYIENLEVVTCHCHQDYFGERCG). Intrachain disulfides connect cysteine 137–cysteine 150, cysteine 145–cysteine 161, and cysteine 163–cysteine 172. The helical transmembrane segment at 190–213 (IALAAIIVFVSAVSVAAIGIITAV) threads the bilayer. Asparagine 236 carries an N-linked (GlcNAc...) asparagine glycan.

It belongs to the amphiregulin family. The immature precursor interacts with CNIH.

It localises to the membrane. Functionally, ligand of the EGF receptor/EGFR. Autocrine growth factor as well as a mitogen for a broad range of target cells including astrocytes, Schwann cells and fibroblasts. The protein is Amphiregulin (Areg) of Rattus norvegicus (Rat).